The sequence spans 303 residues: Probable phytol kinase, chloroplastic (303 aa).

The transit peptide at 1 to 49 (MAAAAAWTGAASPNSLLLSRSPPHAAALAPSPGSSMRRRLLLGVGTPAV) directs the protein to the chloroplast. Transmembrane regions (helical) follow at residues 98–118 (VVHVLSGVLFMSSWPLFSNST), 122–144 (YFAAVVPFLNSMRLLIYGLRLYT), 168–188 (YVLVLLFSVLVFWRESPIGIV), 227–247 (FISGFLLSAMMMLYFSSLGYI), 254–274 (ALGKLALVALAATVVECVPVT), and 276–296 (VVDDNISVPLATMLVAFLLFS).

This sequence belongs to the polyprenol kinase family.

The protein resides in the plastid. It localises to the chloroplast membrane. It catalyses the reaction phytol + CTP = phytyl phosphate + CDP + H(+). Its pathway is cofactor biosynthesis; tocopherol biosynthesis. In terms of biological role, involved in the activation and reutilization of phytol from chlorophyll degradation in plant metabolism, including tocopherol biosynthesis. Catalyzes the conversion of phytol to phytol monophosphate (PMP). In Zea mays (Maize), this protein is Probable phytol kinase, chloroplastic.